The following is a 414-amino-acid chain: Coenzyme A biosynthesis bifunctional protein CoaBC (414 aa).

The segment at 1-191 (MSARKRIVVG…ALPYDMAGVK (191 aa)) is phosphopantothenoylcysteine decarboxylase. A phosphopantothenate--cysteine ligase region spans residues 192–414 (ALVTAGGTRE…IAAFLKSQDG (223 aa)). Residues 275-277 (MAA), aspartate 281, lysine 291, 293-294 (KK), 308-311 (DDVL), phenylalanine 332, lysine 350, and lysine 354 contribute to the CTP site.

It in the N-terminal section; belongs to the HFCD (homo-oligomeric flavin containing Cys decarboxylase) superfamily. The protein in the C-terminal section; belongs to the PPC synthetase family. As to quaternary structure, homododecamer. It depends on Mg(2+) as a cofactor. FMN is required as a cofactor.

The enzyme catalyses N-[(R)-4-phosphopantothenoyl]-L-cysteine + H(+) = (R)-4'-phosphopantetheine + CO2. It carries out the reaction (R)-4'-phosphopantothenate + L-cysteine + CTP = N-[(R)-4-phosphopantothenoyl]-L-cysteine + CMP + diphosphate + H(+). Its pathway is cofactor biosynthesis; coenzyme A biosynthesis; CoA from (R)-pantothenate: step 2/5. The protein operates within cofactor biosynthesis; coenzyme A biosynthesis; CoA from (R)-pantothenate: step 3/5. With respect to regulation, two related chemical scaffolds that potently inhibit the activity of the CoaB moiety of CoaBC through a cryptic allosteric site that sits in the dimer interface region of the CoaB enzyme were identified. Catalyzes two sequential steps in the biosynthesis of coenzyme A. In the first step cysteine is conjugated to 4'-phosphopantothenate to form 4-phosphopantothenoylcysteine. In the second step the latter compound is decarboxylated to form 4'-phosphopantotheine. This Mycolicibacterium smegmatis (strain ATCC 700084 / mc(2)155) (Mycobacterium smegmatis) protein is Coenzyme A biosynthesis bifunctional protein CoaBC.